The chain runs to 320 residues: Zinc finger protein 330 (320 aa).

The tract at residues 1–23 is disordered; sequence MPKKKTGARKKAENRREREKQLR. The short motif at 3 to 11 is the Nuclear localization signal element; it reads KKKTGARKK. Residues 10–22 show a composition bias toward basic and acidic residues; that stretch reads KKAENRREREKQL. 4 consecutive C4-type zinc fingers follow at residues 42–58, 67–104, 129–149, and 175–189; these read CDKC…CYFC, CAQC…CDFC, CVEC…CSFC, and CVSC…CLRC. A disordered region spans residues 206 to 320; the sequence is EKGKQPPCPK…GYAHYEEQEN (115 aa). The segment covering 216–225 has biased composition (basic and acidic residues); the sequence is CGHETQETKD. Residues 269–285 are compositionally biased toward acidic residues; it reads DEEEDEYEAEDDEEEED. S291 is subject to Phosphoserine.

This sequence belongs to the NOA36 family. In terms of tissue distribution, widely expressed. Higher expression seen in heart and skeletal muscle.

The protein resides in the nucleus. Its subcellular location is the nucleolus. It localises to the chromosome. It is found in the centromere. This chain is Zinc finger protein 330 (ZNF330), found in Homo sapiens (Human).